The chain runs to 392 residues: Succinate--CoA ligase [ADP-forming] subunit beta (392 aa).

One can recognise an ATP-grasp domain in the interval 9–236; it reads RDLFERHGLP…QAAVDPLEQA (228 aa). Residues lysine 45, 52 to 54, alanine 94, and glutamate 99 contribute to the ATP site; that span reads GRG. Residues asparagine 191 and aspartate 205 each coordinate Mg(2+). Residues asparagine 256 and 318-320 contribute to the substrate site; that span reads GIT.

The protein belongs to the succinate/malate CoA ligase beta subunit family. As to quaternary structure, heterotetramer of two alpha and two beta subunits. Mg(2+) serves as cofactor.

The enzyme catalyses succinate + ATP + CoA = succinyl-CoA + ADP + phosphate. The catalysed reaction is GTP + succinate + CoA = succinyl-CoA + GDP + phosphate. It functions in the pathway carbohydrate metabolism; tricarboxylic acid cycle; succinate from succinyl-CoA (ligase route): step 1/1. In terms of biological role, succinyl-CoA synthetase functions in the citric acid cycle (TCA), coupling the hydrolysis of succinyl-CoA to the synthesis of either ATP or GTP and thus represents the only step of substrate-level phosphorylation in the TCA. The beta subunit provides nucleotide specificity of the enzyme and binds the substrate succinate, while the binding sites for coenzyme A and phosphate are found in the alpha subunit. This chain is Succinate--CoA ligase [ADP-forming] subunit beta, found in Salinispora tropica (strain ATCC BAA-916 / DSM 44818 / JCM 13857 / NBRC 105044 / CNB-440).